Consider the following 304-residue polypeptide: MQDLRLILIVVGAIAIIALLLHGLWTSRKERSSVFRDRPHKRLKQNREEAFEDDEEGVGEVRTHRASAEAPEPSLGELDPGDTPPRHGKAQPVPERPEPKVEEPSGEDPLFSGEPPHASRARPETHKPDQPETSHIAAPAAAETAPAPAEPAQKTPEPQSQPKQKETVLVLHVSAHAGGSINGEALLQGVLQAGFQFGEMNIFHRHLNPAGSGPVLFSLANMVKPGSFNPENMSEFSTPGVSIFMMVPSYGDAHQNFKLMLQSAQRIADDVGGVVLDDERRMMTPQKLETYKARIRDVIDANSH.

The Periplasmic portion of the chain corresponds to 1-5; the sequence is MQDLR. The helical transmembrane segment at 6-26 threads the bilayer; that stretch reads LILIVVGAIAIIALLLHGLWT. Over 27 to 304 the chain is Cytoplasmic; that stretch reads SRKERSSVFR…IRDVIDANSH (278 aa). A disordered region spans residues 31–165; it reads RSSVFRDRPH…PEPQSQPKQK (135 aa). Basic and acidic residues predominate over residues 121-132; sequence ARPETHKPDQPE. Positions 137 to 158 are enriched in low complexity; the sequence is AAPAAAETAPAPAEPAQKTPEP.

This sequence belongs to the ZipA family. Interacts with FtsZ via their C-terminal domains.

The protein localises to the cell inner membrane. Its function is as follows. Essential cell division protein that stabilizes the FtsZ protofilaments by cross-linking them and that serves as a cytoplasmic membrane anchor for the Z ring. Also required for the recruitment to the septal ring of downstream cell division proteins. The protein is Cell division protein ZipA of Erwinia tasmaniensis (strain DSM 17950 / CFBP 7177 / CIP 109463 / NCPPB 4357 / Et1/99).